Reading from the N-terminus, the 452-residue chain is Protein CSN12 homolog (452 aa).

The PCI domain occupies 249–446 (VTFKYYEGVL…GFVVLSKSGA (198 aa)).

Belongs to the CSN12 family.

The polypeptide is Protein CSN12 homolog (csn-8) (Neurospora crassa (strain ATCC 24698 / 74-OR23-1A / CBS 708.71 / DSM 1257 / FGSC 987)).